A 363-amino-acid polypeptide reads, in one-letter code: Strychnine O-methyltransferase (363 aa).

Positions 204, 227, 249, 250, and 263 each coordinate S-adenosyl-L-methionine. H267 functions as the Proton acceptor in the catalytic mechanism.

It belongs to the class I-like SAM-binding methyltransferase superfamily. Cation-independent O-methyltransferase family.

It catalyses the reaction 10-hydroxystrychnine + S-adenosyl-L-methionine = beta-colubrine + S-adenosyl-L-homocysteine + H(+). The enzyme catalyses 11-demethylbrucine + S-adenosyl-L-methionine = brucine + S-adenosyl-L-homocysteine + H(+). It participates in alkaloid biosynthesis. Functionally, O-methyltransferase involved in the biosynthesis of curare monoterpene indole alkaloids (MIAs), natural products such as strychnine, a neurotoxic compound used as a pesticide to control rodents, and its pharmacologically active derivatives, including brucine, used to regulate blood pressure. Curare alkaloids act as animal glycine receptor antagonists. Catalyzes the conversion of 10-OH strychnine to beta-colubrine, and of 11-deMe brucine to brucine. This Strychnos nux-vomica (Poison nut) protein is Strychnine O-methyltransferase.